A 527-amino-acid chain; its full sequence is EGF domain-specific O-linked N-acetylglucosamine transferase (527 aa).

The signal sequence occupies residues 1–17; the sequence is MLKLLVLGVLLHDVSLS. A Required for optimal activity motif is present at residues 295–297; sequence DYD. The N-linked (GlcNAc...) asparagine glycan is linked to asparagine 354. The Prevents secretion from ER signature appears at 524–527; it reads RDEL.

It belongs to the glycosyltransferase 61 family.

It is found in the endoplasmic reticulum lumen. The enzyme catalyses L-seryl-[protein] + UDP-N-acetyl-alpha-D-glucosamine = 3-O-(N-acetyl-beta-D-glucosaminyl)-L-seryl-[protein] + UDP + H(+). The catalysed reaction is L-threonyl-[protein] + UDP-N-acetyl-alpha-D-glucosamine = 3-O-(N-acetyl-beta-D-glucosaminyl)-L-threonyl-[protein] + UDP + H(+). In terms of biological role, catalyzes the transfer of a single N-acetylglucosamine from UDP-GlcNAc to a serine or threonine residue in extracellular proteins resulting in their modification with a beta-linked N-acetylglucosamine (O-GlcNAc). Specifically glycosylates the Thr residue located between the fifth and sixth conserved cysteines of folded EGF-like domains. This chain is EGF domain-specific O-linked N-acetylglucosamine transferase (EOGT), found in Canis lupus familiaris (Dog).